A 257-amino-acid chain; its full sequence is Tryptophan synthase alpha chain (257 aa).

Catalysis depends on proton acceptor residues Glu47 and Asp58.

It belongs to the TrpA family. Tetramer of two alpha and two beta chains.

The enzyme catalyses (1S,2R)-1-C-(indol-3-yl)glycerol 3-phosphate + L-serine = D-glyceraldehyde 3-phosphate + L-tryptophan + H2O. Its pathway is amino-acid biosynthesis; L-tryptophan biosynthesis; L-tryptophan from chorismate: step 5/5. In terms of biological role, the alpha subunit is responsible for the aldol cleavage of indoleglycerol phosphate to indole and glyceraldehyde 3-phosphate. The chain is Tryptophan synthase alpha chain from Listeria welshimeri serovar 6b (strain ATCC 35897 / DSM 20650 / CCUG 15529 / CIP 8149 / NCTC 11857 / SLCC 5334 / V8).